Here is a 239-residue protein sequence, read N- to C-terminus: MKKKIKYNRILLKISGEFLSSKKTFNINTIFITKLIKQIKLLTNLGVQIGLVIGGGNLFRGSDLEKIGMRRSISDKIGMLSTVMNGLLLHEFMQTANIKSKIFSSTLLEGICERYHIDKAIKCLEKKSVAIFCFGLGIPFFTTDSAACIYGTEIKANILLKATKVDGVYSSDPILNKSAILYKNLSYKDILRKELKVMDYTSLILAYENKLPILVFNMYDPEILYKIIIEKSNIGTLIK.

13 to 16 (KISG) contributes to the ATP binding site. Position 55 (G55) interacts with UMP. ATP-binding residues include G56 and R60. Residues D75 and 136–143 (LGIPFFTT) each bind UMP. Positions 163, 169, and 172 each coordinate ATP.

The protein belongs to the UMP kinase family. In terms of assembly, homohexamer.

Its subcellular location is the cytoplasm. It carries out the reaction UMP + ATP = UDP + ADP. It functions in the pathway pyrimidine metabolism; CTP biosynthesis via de novo pathway; UDP from UMP (UMPK route): step 1/1. Its activity is regulated as follows. Inhibited by UTP. In terms of biological role, catalyzes the reversible phosphorylation of UMP to UDP. In Buchnera aphidicola subsp. Cinara cedri (strain Cc), this protein is Uridylate kinase.